The chain runs to 943 residues: MSKKRLYEIAKEVGVESKVIVAKAQELGLSVKSHSSSVEEADANRITSSLKAGTAKDESKPAPKATPTPKEEKVEPKVDKASVAKSAPAKETSKAEVKEASVALKKPKSRNFKAEREARAKAEAERRKNGGGRDNRNRNQQGNDQGKRHNNDRRNQKGNGQGDHNKGNRDNSTNHDRNFQGKLRNDQNQNNRRDNARNNQAGPRIDLKARAAALKAEQNAEYSRQSETRFREEKAAEQRRAKEQEKARKEKQQAEVAVQKAAAETKPAPKPAPVAPQSAPTAQVQDTRRKKVRPNKSRDNRRVNEDGPKQTRNNKWNNQNQVRNQRNSNWNKNKNKKGKNNRGNSAPKPVTERKFHELPKEFEYTEGMTVAEIAKRIKREPAEIVKKLFMMGVMATQNQSLDGDTIELLMVDYGIEATKKEEVDNADIERFFVDEDYLNKDAMVERAPVVTIMGHVDHGKTTLLDTLRNSRVATGEAGGITQHIGAYQIEEGGKKITFLDTPGHAAFTSMRARGASVTDITVLIVAADDGVMPQTIEAINHSKAAGVPIIVAINKIDKPDANPERVIGELAEHGVISTAWGGDSEFVEISAKFGQNIEELLETILLVAEVEELKADPTVRAIGTVIEARLDKGKGAVATLLVQQGTLNVQDPIVVGNTFGRVRAMTNDLGRRIKTAGPSAPVSITGLNEAPMAGDHFAVYEDEKAARAAGEERAKRALMKQRQQTHRVSLDNLFDTLKAGEMKTVNVIIKADVQGSVEALAASLLKIDVEGVRVNVVHSAVGAINESDITLAEASDAVVIGFNVRPTPQARQQAETDEVEIRLHSIIYKVIEEIEDAMKGMLDPEFEEKIIGEAVIRETFKVSKVGTIGGFMVTNGKITRDSSARVIRDGVVIFDGKLASLKHYKDDVKEVGNAQEGGLTIENYNDIKVDDVIEAYIMEEIKR.

Residues 29-357 form a disordered region; that stretch reads LSVKSHSSSV…KPVTERKFHE (329 aa). 5 stretches are compositionally biased toward basic and acidic residues: residues 69–82, 112–137, 145–155, 163–196, and 224–253; these read PKEE…DKAS, FKAE…DNRN, QGKRHNNDRRN, DHNK…RDNA, and RQSE…EKQQ. The segment covering 254–266 has biased composition (low complexity); the sequence is AEVAVQKAAAETK. The span at 296 to 309 shows a compositional bias: basic and acidic residues; it reads KSRDNRRVNEDGPK. The span at 313-332 shows a compositional bias: low complexity; sequence NNKWNNQNQVRNQRNSNWNK. The region spanning 445-614 is the tr-type G domain; sequence ERAPVVTIMG…LLVAEVEELK (170 aa). The G1 stretch occupies residues 454-461; it reads GHVDHGKT. 454–461 is a GTP binding site; that stretch reads GHVDHGKT. Residues 479-483 are G2; it reads GITQH. The segment at 500–503 is G3; it reads DTPG. GTP contacts are provided by residues 500-504 and 554-557; these read DTPGH and NKID. Residues 554–557 are G4; the sequence is NKID. A G5 region spans residues 590–592; sequence SAK.

This sequence belongs to the TRAFAC class translation factor GTPase superfamily. Classic translation factor GTPase family. IF-2 subfamily.

Its subcellular location is the cytoplasm. In terms of biological role, one of the essential components for the initiation of protein synthesis. Protects formylmethionyl-tRNA from spontaneous hydrolysis and promotes its binding to the 30S ribosomal subunits. Also involved in the hydrolysis of GTP during the formation of the 70S ribosomal complex. This Streptococcus thermophilus (strain CNRZ 1066) protein is Translation initiation factor IF-2.